A 190-amino-acid polypeptide reads, in one-letter code: MNTIPYVIEKTAAGERSYDIFSRLLKDRIIMIGSEFNDDLANRVTAQLLFLSAEDNEKDISIYINSPGGSTSAGYAILDTMDYVKPDVRTICVGMAASMGAILLAGGAKGKRYALKNSEIMIHQPLGGVKGQATDMEISAKRIIKLREKIERFFHERTGQPIEKLKADMERDYFMDADEAKAYGVIDAVL.

S98 (nucleophile) is an active-site residue. Residue H123 is part of the active site.

This sequence belongs to the peptidase S14 family. As to quaternary structure, fourteen ClpP subunits assemble into 2 heptameric rings which stack back to back to give a disk-like structure with a central cavity, resembling the structure of eukaryotic proteasomes.

It localises to the cytoplasm. The catalysed reaction is Hydrolysis of proteins to small peptides in the presence of ATP and magnesium. alpha-casein is the usual test substrate. In the absence of ATP, only oligopeptides shorter than five residues are hydrolyzed (such as succinyl-Leu-Tyr-|-NHMec, and Leu-Tyr-Leu-|-Tyr-Trp, in which cleavage of the -Tyr-|-Leu- and -Tyr-|-Trp bonds also occurs).. Its function is as follows. Cleaves peptides in various proteins in a process that requires ATP hydrolysis. Has a chymotrypsin-like activity. Plays a major role in the degradation of misfolded proteins. This is ATP-dependent Clp protease proteolytic subunit 2 from Bacillus licheniformis (strain ATCC 14580 / DSM 13 / JCM 2505 / CCUG 7422 / NBRC 12200 / NCIMB 9375 / NCTC 10341 / NRRL NRS-1264 / Gibson 46).